We begin with the raw amino-acid sequence, 505 residues long: Putative heat shock protein HSP 90-beta 4 (505 aa).

ATP is bound by residues asparagine 22, lysine 83, and phenylalanine 109. The segment at 197–248 (EKEISDDEEEKGEKEEEDKDDKEKPKTEDVGSDEEDDTDKNNKKKTKKIKEK) is disordered. Residues 200 to 216 (ISDDEEEKGEKEEEDKD) are compositionally biased toward acidic residues.

The protein belongs to the heat shock protein 90 family. In terms of assembly, homodimer.

The protein resides in the cytoplasm. Functionally, putative molecular chaperone that may promote the maturation, structural maintenance and proper regulation of specific target proteins. This Homo sapiens (Human) protein is Putative heat shock protein HSP 90-beta 4 (HSP90AB4P).